Here is a 530-residue protein sequence, read N- to C-terminus: AAA-ATPase At3g28510 (530 aa).

A helical transmembrane segment spans residues 5-25; it reads GAIWGITGTTVTSFMFFWAIY. 250-257 lines the ATP pocket; sequence GPPGTGKS. Disordered regions lie at residues 312–339 and 463–530; these read QRKKKKEEDEEEDGEEKKEGEKKPKVDD and KARK…KSDS. Basic and acidic residues-rich tracts occupy residues 326–339 and 463–511; these read EEKKEGEKKPKVDD and KARK…KEEN. A compositionally biased stretch (polar residues) spans 512–523; sequence GNVSQQNGNSID.

The protein belongs to the AAA ATPase family. BCS1 subfamily. It depends on Mg(2+) as a cofactor.

The protein resides in the membrane. It catalyses the reaction ATP + H2O = ADP + phosphate + H(+). The chain is AAA-ATPase At3g28510 from Arabidopsis thaliana (Mouse-ear cress).